A 169-amino-acid chain; its full sequence is dCTP pyrophosphatase 1 (169 aa).

Residues 1–26 (MSASEEMLGGARGESTTATGPFSFSS) form a disordered region. Residues 14–26 (ESTTATGPFSFSS) show a composition bias toward polar residues. Residues histidine 37 and 46–50 (WEQFH) each bind substrate. Positions 62 and 65 each coordinate Mg(2+). Residue tryptophan 72 coordinates substrate. Serine 84 is modified (phosphoserine). Positions 94 and 97 each coordinate Mg(2+). Residue tyrosine 101 coordinates substrate. Positions 143–169 (LPHGATSENQAMGPADPASESTGQVST) are disordered.

As to quaternary structure, homotetramer. Mg(2+) serves as cofactor.

It localises to the cytoplasm. The protein resides in the cytosol. It carries out the reaction dCTP + H2O = dCMP + diphosphate + H(+). Its function is as follows. Hydrolyzes deoxynucleoside triphosphates (dNTPs) to the corresponding nucleoside monophosphates. Has a strong preference for dCTP and its analogs including 5-iodo-dCTP and 5-methyl-dCTP for which it may even have a higher efficiency. May protect DNA or RNA against the incorporation of these genotoxic nucleotide analogs through their catabolism. The protein is dCTP pyrophosphatase 1 of Bos taurus (Bovine).